Consider the following 81-residue polypeptide: Sulfur carrier protein TusA (81 aa).

Cys-19 acts as the Cysteine persulfide intermediate in catalysis.

Belongs to the sulfur carrier protein TusA family. Interacts with IscS.

It is found in the cytoplasm. It participates in tRNA modification. In terms of biological role, sulfur carrier protein involved in sulfur trafficking in the cell. Part of a sulfur-relay system required for 2-thiolation during synthesis of 2-thiouridine of the modified wobble base 5-methylaminomethyl-2-thiouridine (mnm(5)s(2)U) in tRNA. Interacts with IscS and stimulates its cysteine desulfurase activity. Accepts an activated sulfur from IscS, which is then transferred to TusD, and thus determines the direction of sulfur flow from IscS to 2-thiouridine formation. Also appears to be involved in sulfur transfer for the biosynthesis of molybdopterin. This chain is Sulfur carrier protein TusA, found in Salmonella choleraesuis (strain SC-B67).